A 363-amino-acid chain; its full sequence is D-alanine--D-alanine ligase (363 aa).

Residues 146-352 form the ATP-grasp domain; that stretch reads KLCAADAGVA…FTALIDKLLH (207 aa). Residue 179–234 coordinates ATP; sequence DSTFGYPLFVKPASLGSSVGISKVHLPAALPEALKVACSYDRKILVEAAVSGKEIE. D305, E319, and N321 together coordinate Mg(2+).

This sequence belongs to the D-alanine--D-alanine ligase family. Mg(2+) is required as a cofactor. It depends on Mn(2+) as a cofactor.

It is found in the cytoplasm. It catalyses the reaction 2 D-alanine + ATP = D-alanyl-D-alanine + ADP + phosphate + H(+). Its pathway is cell wall biogenesis; peptidoglycan biosynthesis. Cell wall formation. This Chlorobium limicola (strain DSM 245 / NBRC 103803 / 6330) protein is D-alanine--D-alanine ligase.